The chain runs to 2390 residues: Spectrin beta chain, non-erythrocytic 2 (2390 aa).

Serine 2 is modified (N-acetylserine). Residues 2-278 (SSTLSPTDFD…IITYVATYYH (277 aa)) are actin-binding. Serine 6 and serine 31 each carry phosphoserine. Calponin-homology (CH) domains follow at residues 57-161 (AVQK…LRFQ) and 176-281 (KSAK…HYFS). Spectrin repeat units lie at residues 306–414 (LVEK…LALR), 427–527 (AARF…RERL), 532–639 (ELQK…RLEE), 642–744 (RLWR…QRLA), 749–849 (LYQF…RALE), and 855–954 (YTML…KAAL). Serine 959 is modified (phosphoserine). Spectrin repeat units lie at residues 960-1063 (IQNY…SLGE), 1066-1169 (RLQD…GRLA), 1174-1262 (FQGF…RHKK), 1279-1379 (EQQH…ARSL), 1384-1485 (RAEL…RRLQ), 1489-1586 (EQHQ…RLED), 1589-1692 (RAQQ…RLQE), 1696-1797 (LCQL…GQVL), 1801-1904 (YELQ…QLLL), 1910-2010 (FRFF…DWLQ), and 2017-2076 (VFGR…EKLT). Serine 1073 is modified (phosphoserine). Over residues 2081–2096 (REKERKRKREEEERRK) the composition is skewed to basic and acidic residues. 2 disordered regions span residues 2081–2222 (REKE…EQME) and 2331–2390 (SSAS…KKNK). The segment covering 2116–2125 (QTASDTTWDG) has biased composition (polar residues). A phosphoserine mark is found at serine 2171 and serine 2199. A PH domain is found at 2218 to 2328 (QEQMEGMLCR…WLRVVNAAIA (111 aa)). Threonine 2354 bears the Phosphothreonine mark. Residue serine 2359 is modified to Phosphoserine. Residues 2370–2383 (RSKDGREREREKRF) are compositionally biased toward basic and acidic residues.

Belongs to the spectrin family. In terms of tissue distribution, highly expressed in brain, kidney, pancreas, and liver, and at lower levels in lung and placenta.

Its subcellular location is the cytoplasm. It is found in the cytoskeleton. It localises to the cell cortex. In terms of biological role, probably plays an important role in neuronal membrane skeleton. This Homo sapiens (Human) protein is Spectrin beta chain, non-erythrocytic 2 (SPTBN2).